The sequence spans 258 residues: tRNA pseudouridine synthase A (258 aa).

Asp-55 (nucleophile) is an active-site residue. Position 113 (Tyr-113) interacts with substrate.

The protein belongs to the tRNA pseudouridine synthase TruA family. In terms of assembly, homodimer.

It carries out the reaction uridine(38/39/40) in tRNA = pseudouridine(38/39/40) in tRNA. Functionally, formation of pseudouridine at positions 38, 39 and 40 in the anticodon stem and loop of transfer RNAs. This Limosilactobacillus fermentum (strain NBRC 3956 / LMG 18251) (Lactobacillus fermentum) protein is tRNA pseudouridine synthase A.